The chain runs to 545 residues: Lysine--tRNA ligase (545 aa).

A 'HIGH' region motif is present at residues 33–41; the sequence is VSGLQHIGR. The 'KMSKS' region signature appears at 288–292; that stretch reads DMSSS.

It belongs to the class-I aminoacyl-tRNA synthetase family.

Its subcellular location is the cytoplasm. It catalyses the reaction tRNA(Lys) + L-lysine + ATP = L-lysyl-tRNA(Lys) + AMP + diphosphate. This chain is Lysine--tRNA ligase (lysS), found in Aeropyrum pernix (strain ATCC 700893 / DSM 11879 / JCM 9820 / NBRC 100138 / K1).